A 634-amino-acid chain; its full sequence is Protein IcfG (634 aa).

Residues His306–Ala361 enclose the HAMP domain. In terms of domain architecture, PPM-type phosphatase spans Pro385 to Arg633.

Involved in cross-regulation of inorganic carbon and glucose metabolisms. This Synechocystis sp. (strain ATCC 27184 / PCC 6803 / Kazusa) protein is Protein IcfG (icfG).